Reading from the N-terminus, the 273-residue chain is Peptide deformylase 1B, chloroplastic/mitochondrial (273 aa).

Residues 1–56 (MAVCNCFLQAPPLSRILLPVLSRRATTLSAGYGRLKSTVTFCSTVNRTSPLTSSVR) constitute a chloroplast and mitochondrion transit peptide. Fe cation is bound by residues Cys171 and His213. Residue Glu214 is part of the active site. His217 lines the Fe cation pocket. Basic and acidic residues predominate over residues 246–261 (YEEKTGLPSPERVEAR). The interval 246–273 (YEEKTGLPSPERVEARQKRKAGVGFGKR) is disordered. Positions 262–273 (QKRKAGVGFGKR) are enriched in basic residues.

It belongs to the polypeptide deformylase family. In terms of assembly, homodimer. Fe(2+) serves as cofactor. In terms of tissue distribution, expressed in leaves and flowers.

It localises to the plastid. The protein localises to the chloroplast stroma. The protein resides in the mitochondrion. The enzyme catalyses N-terminal N-formyl-L-methionyl-[peptide] + H2O = N-terminal L-methionyl-[peptide] + formate. Its activity is regulated as follows. Inhibited by actinonin. Functionally, removes the formyl group from the N-terminal Met of newly synthesized proteins. Has a preferred substrate specificity towards the photosystem II (PS II) D1 polypeptide. The chain is Peptide deformylase 1B, chloroplastic/mitochondrial (PDF1B) from Arabidopsis thaliana (Mouse-ear cress).